The following is a 248-amino-acid chain: Cobalt transport protein CbiM (248 aa).

A signal peptide spans 1–31 (MLKVIKKYRKFITFLMIGLVYTLAYPATAHA). A run of 6 helical transmembrane segments spans residues 39-59 (LPPR…IYGL), 75-95 (VMLA…LPSV), 107-127 (LGTV…VLLF), 139-159 (TLGA…YAVW), 173-195 (LFLC…LAIV), and 213-233 (IYAI…VIVY).

This sequence belongs to the CbiM family. Forms an energy-coupling factor (ECF) transporter complex composed of an ATP-binding protein (A component, CbiO), a transmembrane protein (T component, CbiQ) and 2 possible substrate-capture proteins (S components, CbiM and CbiN) of unknown stoichimetry.

The protein localises to the cell membrane. It functions in the pathway cofactor biosynthesis; adenosylcobalamin biosynthesis. In terms of biological role, part of the energy-coupling factor (ECF) transporter complex CbiMNOQ involved in cobalt import. The chain is Cobalt transport protein CbiM from Limosilactobacillus reuteri (strain DSM 20016) (Lactobacillus reuteri).